The primary structure comprises 128 residues: uncharacterized protein (128 aa).

This is an uncharacterized protein from Gallus gallus (Chicken).